Consider the following 205-residue polypeptide: ESCRT-related protein CHMP1 (205 aa).

Coiled coils occupy residues 13–51 (DLKF…MDGA) and 109–140 (GNLQ…GAMA).

The protein belongs to the SNF7 family.

The protein resides in the cytoplasm. Its subcellular location is the endosome membrane. In terms of biological role, involved in ESCRT-dependent multivesicular body (MVB) formation and sorting of endosomal cargo proteins into MVBs. This is ESCRT-related protein CHMP1 from Oryza sativa subsp. japonica (Rice).